Here is a 303-residue protein sequence, read N- to C-terminus: MTKLILAPEVQAAFANGQPVVALESTVISHGLPYPHNREIALQLEATVRAGGAVPATIAVIQGQVHVGLTNEQIEHFATATDVLKLSRRDIGYAVAAGRDGATTVAATMAIAELAGIQVFATGGIGGVHRGARDTWDVSADLGELGKSSVLVVCAGAKSILDLPATLEVLETYGVPVVGYTTEELPAFYSAHSGLQLGRRVDDPTQAAAAWAAHRLYGGGSGMVLAVPPPVEKALDPQFVEAAIGRAIAQAEAAGIRGAAVTPFLLSAMARETEGESIATNTALLNNNAQVAAQVAVALFQSV.

The Proton donor role is filled by Glu-24. 2 residues coordinate substrate: Lys-85 and Val-105. Asp-137 serves as a coordination point for Mn(2+). 139 to 141 is a binding site for substrate; sequence SAD. The active-site Nucleophile is the Lys-158.

The protein belongs to the pseudouridine-5'-phosphate glycosidase family. Homotrimer. The cofactor is Mn(2+).

It carries out the reaction D-ribose 5-phosphate + uracil = psi-UMP + H2O. Its function is as follows. Catalyzes the reversible cleavage of pseudouridine 5'-phosphate (PsiMP) to ribose 5-phosphate and uracil. Functions biologically in the cleavage direction, as part of a pseudouridine degradation pathway. The sequence is that of Pseudouridine-5'-phosphate glycosidase from Herpetosiphon aurantiacus (strain ATCC 23779 / DSM 785 / 114-95).